Here is a 101-residue protein sequence, read N- to C-terminus: Large ribosomal subunit protein eL30 (101 aa).

The protein belongs to the eukaryotic ribosomal protein eL30 family.

The chain is Large ribosomal subunit protein eL30 (rpl30e) from Thermococcus celer.